Consider the following 167-residue polypeptide: uncharacterized protein (167 aa).

The chain crosses the membrane as a helical span at residues 39–59 (LSLFSLSPLFLLLSISSLIFS). A coiled-coil region spans residues 92–122 (LGTQIEMITQAMTTLESRVTDLQQESNDHRT). Residues 134 to 167 (RDLGDENRPKPTTNKMIATGEQHKGEVSTSLFHD) are disordered. Residues 154-167 (EQHKGEVSTSLFHD) show a composition bias toward basic and acidic residues.

It is found in the mitochondrion membrane. This is an uncharacterized protein from Arabidopsis thaliana (Mouse-ear cress).